Consider the following 637-residue polypeptide: Transcription factor PHYTOCHROME INTERACTING FACTOR-LIKE 15 (637 aa).

Residues 35-46 (FFGGTGGGGGGS) show a composition bias toward gly residues. 3 disordered regions span residues 35–54 (FFGG…QERQ), 146–213 (ASLP…EGVM), and 356–397 (ECSA…RRRR). The span at 149 to 170 (PASNHNGATNNRNAPVATTTTR) shows a compositional bias: polar residues. Residues 384-397 (RTAEVHNLSERRRR) form a basic motif region. A compositionally biased stretch (basic and acidic residues) spans 384–397 (RTAEVHNLSERRRR). One can recognise a bHLH domain in the interval 384–433 (RTAEVHNLSERRRRDRINEKMRALQELIPNCNKIDKASMLDEAIEYLKTL). The helix-loop-helix motif stretch occupies residues 398 to 433 (DRINEKMRALQELIPNCNKIDKASMLDEAIEYLKTL). Residues 601–637 (GDNENFRIPSSAQTKSSQFSDGTGKGTNARERDGAET) form a disordered region. Polar residues predominate over residues 608–621 (IPSSAQTKSSQFSD). A compositionally biased stretch (basic and acidic residues) spans 628–637 (NARERDGAET).

This sequence belongs to the bHLH protein family. As to quaternary structure, interacts with LF and PRR1.

The protein resides in the nucleus. Functionally, transcription factor that may act as negative regulator of phyB-dependent light signal transduction. The chain is Transcription factor PHYTOCHROME INTERACTING FACTOR-LIKE 15 from Oryza sativa subsp. japonica (Rice).